The following is a 255-amino-acid chain: Ribonuclease HII (255 aa).

The RNase H type-2 domain occupies 72-255 (RLIAGIDEVG…RTFAPIKDMI (184 aa)). Residues Asp78, Glu79, and Asp170 each coordinate a divalent metal cation.

This sequence belongs to the RNase HII family. It depends on Mn(2+) as a cofactor. Mg(2+) is required as a cofactor.

It is found in the cytoplasm. It carries out the reaction Endonucleolytic cleavage to 5'-phosphomonoester.. Endonuclease that specifically degrades the RNA of RNA-DNA hybrids. The sequence is that of Ribonuclease HII from Enterococcus faecalis (strain ATCC 700802 / V583).